The following is a 425-amino-acid chain: CinA-like protein (425 aa).

It belongs to the CinA family.

This is CinA-like protein from Shewanella sp. (strain MR-4).